The primary structure comprises 206 residues: Recombination protein RecR (206 aa).

A C4-type zinc finger spans residues 60 to 75 (CARCNTFCEGGLCDIC). The Toprim domain maps to 83-178 (RRLMVVHMPA…KVSRLSQGIP (96 aa)).

This sequence belongs to the RecR family.

In terms of biological role, may play a role in DNA repair. It seems to be involved in an RecBC-independent recombinational process of DNA repair. It may act with RecF and RecO. In Neisseria gonorrhoeae (strain NCCP11945), this protein is Recombination protein RecR.